We begin with the raw amino-acid sequence, 162 residues long: Ubiquitin-fold modifier-conjugating enzyme 1 (162 aa).

Cys-115 functions as the Glycyl thioester intermediate in the catalytic mechanism.

The protein belongs to the ubiquitin-conjugating enzyme family. UFC1 subfamily. In terms of assembly, interacts with uba-5. As to expression, expressed in the intestine.

Functionally, E2-like enzyme which forms an intermediate with ufm-1. The intermediate is formed via a thioester linkage. This Caenorhabditis elegans protein is Ubiquitin-fold modifier-conjugating enzyme 1.